The sequence spans 237 residues: Survival of motor neuron-related-splicing factor 30 (237 aa).

A compositionally biased stretch (polar residues) spans 52-69 (SQPAEGTTSTKSSETVAP). Disordered stretches follow at residues 52 to 73 (SQPA…SHSW) and 149 to 198 (REYK…RSIF). The region spanning 72-132 (SWRVGDHCMA…KKVEEGRIRD (61 aa)) is the Tudor domain. Residues 142–160 (KELQAEQREYKKKKAQKKV) carry the Nuclear localization signal motif. Basic residues predominate over residues 151–161 (YKKKKAQKKVQ). Positions 162-175 (RMKELEQEREDQKS) are enriched in basic and acidic residues. Over residues 176 to 185 (KWQQFNNKAY) the composition is skewed to polar residues.

This sequence belongs to the SMN family. In terms of assembly, associates with spliceosomes.

It is found in the nucleus speckle. The protein localises to the nucleus. Its subcellular location is the cajal body. In terms of biological role, involved in spliceosome assembly. This Danio rerio (Zebrafish) protein is Survival of motor neuron-related-splicing factor 30 (smndc1).